Consider the following 342-residue polypeptide: MRKILPSKLAFGIFDHLDEDGNAMARQYADRLTLAEACDRLGFYAYHLAEHHFSPHGRSPSPNLFLSSVAQRTRQLRLGPLVMLLSLSHPLRAFEEICMLDHLSGGRAELGIGRGSLPIELGYFGIDPDAVAGRYFEASEILMEAMRGGNLSYRGDHFELNNVPLILRPHQRPHPPTWIATNRPESARWAATNGANVACVGPASLVRRITDAFRSEEGLSSDANCNASFLGLLRMIVVGHSAEHAYSLAAPAFQRWLNNFKFLYDLHAIPVPPNLPLTFDAAIESELCVVGTAAVVRRTLLDQLEEAGANYLLCQVAFGDLPLDASLYTAMTIQSELMDRVG.

Belongs to the bacterial luciferase oxidoreductase family.

This is an uncharacterized protein from Sinorhizobium fredii (strain NBRC 101917 / NGR234).